Here is a 142-residue protein sequence, read N- to C-terminus: UPF0275 protein PM0505 (142 aa).

Belongs to the UPF0275 family.

This chain is UPF0275 protein PM0505, found in Pasteurella multocida (strain Pm70).